Here is a 609-residue protein sequence, read N- to C-terminus: Transcription factor ntnD (609 aa).

The zn(2)-C6 fungal-type DNA-binding region spans 1–7; that stretch reads MCVGIEC. Residues 46 to 104 form a disordered region; it reads FRDQNESSLNRIHNRRTSNSQPSTRSINNTTTIPASNNEPLALSQPPSASSQNQVEKDQ. Residues 51–84 are compositionally biased toward polar residues; it reads ESSLNRIHNRRTSNSQPSTRSINNTTTIPASNNE. Residues 85–97 are compositionally biased toward low complexity; sequence PLALSQPPSASSQ.

Belongs to the TRI10 transcription regulator family.

It is found in the nucleus. In terms of biological role, transcription factor; part of the gene cluster that mediates the biosynthesis of meroterpenoids. The protein is Transcription factor ntnD of Nectria sp.